A 306-amino-acid polypeptide reads, in one-letter code: Ribonucleoside-diphosphate reductase small subunit (306 aa).

3 residues coordinate Fe cation: Asp66, Glu96, and His99. Residue Tyr103 is part of the active site. Residues 153–173 (ILMILIEGIFFVSSFAAIAYL) form a helical membrane-spanning segment. Fe cation contacts are provided by Glu159, Glu193, and His196.

Belongs to the ribonucleoside diphosphate reductase small chain family. Heterotetramer composed of a homodimer of the large subunit (R1) and a homodimer of the small subunit (R2). Larger multisubunit protein complex are also active, composed of (R1)n(R2)n. Requires Fe cation as cofactor.

The protein resides in the host membrane. The enzyme catalyses a 2'-deoxyribonucleoside 5'-diphosphate + [thioredoxin]-disulfide + H2O = a ribonucleoside 5'-diphosphate + [thioredoxin]-dithiol. Functionally, ribonucleoside-diphosphate reductase holoenzyme provides the precursors necessary for viral DNA synthesis. Allows virus growth in non-dividing cells, as well as reactivation from latency in infected hosts. Catalyzes the biosynthesis of deoxyribonucleotides from the corresponding ribonucleotides. This chain is Ribonucleoside-diphosphate reductase small subunit, found in Varicella-zoster virus (strain Dumas) (HHV-3).